We begin with the raw amino-acid sequence, 483 residues long: MLFRSALLSNVLLLPACAHDVLFSRDLPLPIAANAESYTDCANAAWPPSNVGVELVPQPPDDELRAMVDEMSAENIEATITKLVSFGTRHTLSTFNSSTRGINAARDWIASEMRKYAAESNGTMTVEVQSYVQGVASRIPFPVTISNVLAKATGSEDPSRVYVMTGHYDSRVTDVLNYESDAPGANDDASGTAIAMELARVLAKHQPKSTIILGAVSGEEQGLYGSTYLAQTLKNTSTNVEGMLNCDIVGSSTGDRGQKDPFTIRAFAQGPPPLSAESSAKAAQRLQIGGENDSPARELARFSAEVAANNATGMKVAIIYRLDRFLRGGDHTGFLQAGYPAIRYTEPNENFAHQHQDIRTENGTVYGDLIEFVDFDFTARVGKVNLATLWSLAQAPAMPRNVTIDATILDNESRIKWIISNSTDVASYEVVWRSTIASLWTHMLDVGKVGYVVLPLSKDNVIFGIRAVGKNGYKSPAVYPFPG.

A signal peptide spans 1–18 (MLFRSALLSNVLLLPACA). 2 N-linked (GlcNAc...) asparagine glycosylation sites follow: Asn-96 and Asn-121. Zn(2+) contacts are provided by His-167, Asp-187, and Glu-220. The N-linked (GlcNAc...) asparagine glycan is linked to Asn-235. Asp-247 serves as a coordination point for Zn(2+). 5 N-linked (GlcNAc...) asparagine glycosylation sites follow: Asn-310, Asn-362, Asn-401, Asn-411, and Asn-421. Residues 396-483 (PAMPRNVTID…KSPAVYPFPG (88 aa)) form the Fibronectin type-III domain.

It belongs to the peptidase M28 family. M28B subfamily. The cofactor is Zn(2+).

It is found in the secreted. This Pyrenophora tritici-repentis (strain Pt-1C-BFP) (Wheat tan spot fungus) protein is Probable zinc metalloprotease PTRG_04977.